The sequence spans 396 residues: Phosphoglycerate kinase (396 aa).

Residues 21-23 (DLN), Arg-36, 59-62 (HLGR), Arg-113, and Arg-146 contribute to the substrate site. Residues Lys-197, Glu-319, and 345-348 (GGDT) each bind ATP.

This sequence belongs to the phosphoglycerate kinase family. In terms of assembly, monomer.

Its subcellular location is the cytoplasm. The enzyme catalyses (2R)-3-phosphoglycerate + ATP = (2R)-3-phospho-glyceroyl phosphate + ADP. It participates in carbohydrate degradation; glycolysis; pyruvate from D-glyceraldehyde 3-phosphate: step 2/5. The polypeptide is Phosphoglycerate kinase (Legionella pneumophila (strain Lens)).